A 180-amino-acid polypeptide reads, in one-letter code: Nascent polypeptide-associated complex subunit alpha (180 aa).

The NAC-A/B domain occupies 16 to 80; that stretch reads SKNEKKAREL…AKVDDMNKRI (65 aa). The interval 81–113 is disordered; it reads AEAQQQQAQQDALSKAAGETGEAGEEDKSQDAI. Residues 82-100 are compositionally biased toward low complexity; that stretch reads EAQQQQAQQDALSKAAGET. A UBA domain is found at 142 to 179; it reads LDAKDIDIIVEQTQVSRAKAVKALRVHDGDMVNAIMEL.

It belongs to the NAC-alpha family. As to quaternary structure, part of the nascent polypeptide-associated complex (NAC), consisting of EGD2 and EGD1. NAC associates with ribosomes via EGD1.

It localises to the cytoplasm. The protein localises to the nucleus. Component of the nascent polypeptide-associated complex (NAC), a dynamic component of the ribosomal exit tunnel, protecting the emerging polypeptides from interaction with other cytoplasmic proteins to ensure appropriate nascent protein targeting. The NAC complex also promotes mitochondrial protein import by enhancing productive ribosome interactions with the outer mitochondrial membrane and blocks the inappropriate interaction of ribosomes translating non-secretory nascent polypeptides with translocation sites in the membrane of the endoplasmic reticulum. EGD2 may also be involved in transcription regulation. The chain is Nascent polypeptide-associated complex subunit alpha (EGD2) from Debaryomyces hansenii (strain ATCC 36239 / CBS 767 / BCRC 21394 / JCM 1990 / NBRC 0083 / IGC 2968) (Yeast).